A 193-amino-acid chain; its full sequence is Ribosomal RNA large subunit methyltransferase E (193 aa).

Residues Gly-49, Phe-51, Asp-69, Asp-86, and Asp-106 each contribute to the S-adenosyl-L-methionine site. Lys-146 acts as the Proton acceptor in catalysis.

The protein belongs to the class I-like SAM-binding methyltransferase superfamily. RNA methyltransferase RlmE family.

Its subcellular location is the cytoplasm. The enzyme catalyses uridine(2552) in 23S rRNA + S-adenosyl-L-methionine = 2'-O-methyluridine(2552) in 23S rRNA + S-adenosyl-L-homocysteine + H(+). Its function is as follows. Specifically methylates the uridine in position 2552 of 23S rRNA at the 2'-O position of the ribose in the fully assembled 50S ribosomal subunit. The polypeptide is Ribosomal RNA large subunit methyltransferase E (Brachyspira hyodysenteriae (strain ATCC 49526 / WA1)).